The chain runs to 194 residues: Large ribosomal subunit protein bL25 (194 aa).

This sequence belongs to the bacterial ribosomal protein bL25 family. CTC subfamily. As to quaternary structure, part of the 50S ribosomal subunit; part of the 5S rRNA/L5/L18/L25 subcomplex. Contacts the 5S rRNA. Binds to the 5S rRNA independently of L5 and L18.

This is one of the proteins that binds to the 5S RNA in the ribosome where it forms part of the central protuberance. The polypeptide is Large ribosomal subunit protein bL25 (Neorickettsia sennetsu (strain ATCC VR-367 / Miyayama) (Ehrlichia sennetsu)).